Here is a 558-residue protein sequence, read N- to C-terminus: Putative cation/proton antiporter YbaL (558 aa).

Topologically, residues 1-3 (MHH) are periplasmic. A helical membrane pass occupies residues 4–24 (ATPLITTIVGGLVLAFILGML). Over 25–31 (ANKLRIS) the chain is Cytoplasmic. The helical transmembrane segment at 32–52 (PLVGYLLAGVLAGPFTPGFVA) threads the bilayer. Over 53–55 (DTK) the chain is Periplasmic. A helical transmembrane segment spans residues 56 to 76 (LAPELAELGVILLMFGVGLHF). The Cytoplasmic segment spans residues 77-85 (SLKDLMAVK). A helical membrane pass occupies residues 86 to 106 (AIAIPGAIAQIAVATLLGMAL). At 107–112 (SAVLGW) the chain is on the periplasmic side. Residues 113-133 (SLMTGIVFGLCLSTASTVVLL) form a helical membrane-spanning segment. Over 134–148 (RALEERQLIDSQRGQ) the chain is Cytoplasmic. A helical membrane pass occupies residues 149–169 (IAIGWLIVEDLVMVLTLVLLP). The Periplasmic segment spans residues 170–185 (AVAGMMEQGDVGFATL). A helical membrane pass occupies residues 186–206 (AVDMGITIGKVIAFIAIMMLV). The Cytoplasmic segment spans residues 207–225 (GRRLVPWIMARSAATGSRE). A helical membrane pass occupies residues 226 to 246 (LFTLSVLALALGVAFGAVELF). A topological domain (periplasmic) is located at residue Asp-247. A helical transmembrane segment spans residues 248-268 (VSFALGAFFAGMVLNESELSH). The Cytoplasmic segment spans residues 269 to 279 (RAAHDTLPLRD). A helical membrane pass occupies residues 280–300 (AFAVLFFVSVGMLFDPLILIQ). At 301-303 (QPL) the chain is on the periplasmic side. A helical transmembrane segment spans residues 304–324 (AVLATLAIILFGKSLAAFFLV). Topologically, residues 325–336 (RLFGHSQRTALT) are cytoplasmic. Residues 337–357 (IAASLAQIGEFAFILAGLGMA) form a helical membrane-spanning segment. The Periplasmic portion of the chain corresponds to 358 to 367 (LNLLPQAGQN). The chain crosses the membrane as a helical span at residues 368-388 (LVLAGAILSIMLNPVLFALLE). The Cytoplasmic segment spans residues 389–558 (KYLAKTETLE…TPPAGEVVTG (170 aa)). Positions 417–534 (CNHALLVGYG…TERGANQVVM (118 aa)) constitute an RCK N-terminal domain. Residues 427-428 (RV), 447-448 (ET), 467-468 (NA), Glu-494, and Arg-514 each bind AMP.

Belongs to the monovalent cation:proton antiporter 2 (CPA2) transporter (TC 2.A.37) family.

It localises to the cell inner membrane. This Escherichia coli (strain K12) protein is Putative cation/proton antiporter YbaL (ybaL).